Here is a 165-residue protein sequence, read N- to C-terminus: Ribosome maturation factor RimM (165 aa).

A PRC barrel domain is found at 94–165 (EDEFYIADLN…YVVLNYQREI (72 aa)).

This sequence belongs to the RimM family. Binds ribosomal protein uS19.

The protein resides in the cytoplasm. Its function is as follows. An accessory protein needed during the final step in the assembly of 30S ribosomal subunit, possibly for assembly of the head region. Essential for efficient processing of 16S rRNA. May be needed both before and after RbfA during the maturation of 16S rRNA. It has affinity for free ribosomal 30S subunits but not for 70S ribosomes. The chain is Ribosome maturation factor RimM from Rickettsia felis (strain ATCC VR-1525 / URRWXCal2) (Rickettsia azadi).